Reading from the N-terminus, the 369-residue chain is Biglycan (369 aa).

Residues 1 to 16 (MWPLWPLAALLALSQA) form the signal peptide. Residues 17 to 37 (LPFEQKAFWDFTLDDGLPMLN) constitute a propeptide that is removed on maturation. 2 O-linked (Xyl...) (glycosaminoglycan) serine glycosylation sites follow: Ser-42 and Ser-48. 2 cysteine pairs are disulfide-bonded: Cys-64–Cys-70 and Cys-68–Cys-77. LRR repeat units follow at residues 83–103 (KAVPKEISPDTTLLDLQNNDI), 104–127 (SELRKDDFKGLQHLYALVLVNNKI), 128–151 (SKIHEKAFSPLRKLQKLYISKNHL), 152–172 (VEIPPNLPSSLVELRIHDNRI), 173–196 (RKVPKGVFSGLRNMNCIEMGGNPL), 197–221 (ENSGFEPGAFDGLKLNYLRISEAKL), 222–242 (TGIPKDLPETLNELHLDHNKI), 243–266 (QAIELEDLLRYSKLYRLGLGHNQI), 267–290 (RMIENGSLSFLPTLRELHLDNNKL), 291–313 (SRVPAGLPDLKLLQVVYLHTNNI), 314–343 (TKVGVNDFCPVGFGVKRAYYNGISLFNNPV), and 344–369 (PYWEVQPATFRCVTDRLAIQFGNYKK). Ser-181 and Ser-199 each carry an O-linked (Xyl...) (glycosaminoglycan) serine glycan. N-linked (GlcNAc...) asparagine glycosylation is found at Asn-271 and Asn-312. Cys-322 and Cys-355 are disulfide-bonded.

The protein belongs to the small leucine-rich proteoglycan (SLRP) family. SLRP class I subfamily. Homodimer. Forms a ternary complex with MFAP2 and ELN. The two attached glycosaminoglycan chains can be either chondroitin sulfate or dermatan sulfate. Found in several connective tissues, especially in articular cartilages.

It localises to the secreted. It is found in the extracellular space. The protein resides in the extracellular matrix. May be involved in collagen fiber assembly. This is Biglycan (BGN) from Bos taurus (Bovine).